Consider the following 109-residue polypeptide: Nucleoid-associated protein Ssed_2851 (109 aa).

It belongs to the YbaB/EbfC family. As to quaternary structure, homodimer.

It is found in the cytoplasm. The protein resides in the nucleoid. Its function is as follows. Binds to DNA and alters its conformation. May be involved in regulation of gene expression, nucleoid organization and DNA protection. This Shewanella sediminis (strain HAW-EB3) protein is Nucleoid-associated protein Ssed_2851.